We begin with the raw amino-acid sequence, 84 residues long: Small ribosomal subunit protein bS20 (84 aa).

This sequence belongs to the bacterial ribosomal protein bS20 family.

Its function is as follows. Binds directly to 16S ribosomal RNA. The chain is Small ribosomal subunit protein bS20 from Azobacteroides pseudotrichonymphae genomovar. CFP2.